The following is a 262-amino-acid chain: 3-methyl-2-oxobutanoate hydroxymethyltransferase (262 aa).

The Mg(2+) site is built by D43 and D82. Residues 43–44, D82, and K111 each bind 3-methyl-2-oxobutanoate; that span reads DS. Residue E113 coordinates Mg(2+). Residue E180 is the Proton acceptor of the active site.

The protein belongs to the PanB family. In terms of assembly, homodecamer; pentamer of dimers. Requires Mg(2+) as cofactor.

It localises to the cytoplasm. The enzyme catalyses 3-methyl-2-oxobutanoate + (6R)-5,10-methylene-5,6,7,8-tetrahydrofolate + H2O = 2-dehydropantoate + (6S)-5,6,7,8-tetrahydrofolate. It participates in cofactor biosynthesis; (R)-pantothenate biosynthesis; (R)-pantoate from 3-methyl-2-oxobutanoate: step 1/2. Its function is as follows. Catalyzes the reversible reaction in which hydroxymethyl group from 5,10-methylenetetrahydrofolate is transferred onto alpha-ketoisovalerate to form ketopantoate. This chain is 3-methyl-2-oxobutanoate hydroxymethyltransferase, found in Wolinella succinogenes (strain ATCC 29543 / DSM 1740 / CCUG 13145 / JCM 31913 / LMG 7466 / NCTC 11488 / FDC 602W) (Vibrio succinogenes).